Reading from the N-terminus, the 310-residue chain is MILTVTLNPSIDISYCLENFNMDTVNRVTDVSKTPGGKGLNVTRVLSQLGDNVVATGLLGGDFGDFIRSGLDALEIRHQFLSIGGETRHCIAVLHEGQQTEILEKGPHITKDEADAFLNHLKLIFDAATIITVSGSLPKGLPSDYYARLISLANHFNKKVVLDCSGEALRSVLKSSAKPTVIKPNLEELTQLIGKPISYSLDELKSTLQQDLFRGIDWVIVSLGARGAFAKHGNHYYQVTIPKIEVINPVGSGDATVAGIASALEHQLDDTNLLKRANVLGMLNAQETLTGHINLTYYQELISQIQVKEV.

It belongs to the carbohydrate kinase PfkB family. LacC subfamily.

It carries out the reaction D-tagatofuranose 6-phosphate + ATP = D-tagatofuranose 1,6-bisphosphate + ADP + H(+). It functions in the pathway carbohydrate metabolism; D-tagatose 6-phosphate degradation; D-glyceraldehyde 3-phosphate and glycerone phosphate from D-tagatose 6-phosphate: step 1/2. The polypeptide is Tagatose-6-phosphate kinase (Streptococcus agalactiae serotype V (strain ATCC BAA-611 / 2603 V/R)).